Here is a 455-residue protein sequence, read N- to C-terminus: N-acetyl-S-(2-succino)cysteine lyase (455 aa).

106–107 is a fumarate binding site; that stretch reads TT. H154 functions as the Proton donor/acceptor in the catalytic mechanism. R233 contacts fumarate. Residue S277 is the Proton donor/acceptor of the active site. Fumarate contacts are provided by residues S278 and 283 to 285; that span reads KRN.

This sequence belongs to the lyase 1 family.

The enzyme catalyses N-acetyl-S-(2-succino)-L-cysteine = N-acetyl-L-cysteine + fumarate. It participates in amino-acid biosynthesis; L-cysteine biosynthesis. Catalyzes the cleavage of N-acetyl-S-(2-succino)cysteine into fumarate and N-acetylcysteine. Is involved in a S-(2-succino)cysteine (2SC) degradation pathway that allows the bacterium to recover cysteine from 2SC and to detoxify 2SC that may be a toxic metabolite. Can also perform the reverse reaction in vitro, and has minor activity against 2SC and other small molecule thiols. This is N-acetyl-S-(2-succino)cysteine lyase from Enterococcus italicus (strain DSM 15952 / CCUG 50447 / LMG 22039 / TP 1.5).